Reading from the N-terminus, the 461-residue chain is Glycine--tRNA ligase (461 aa).

Positions 99 and 173 each coordinate substrate. Residues 205 to 207 (RNE), 215 to 220 (FRTREF), 289 to 290 (EL), and 333 to 336 (GADR) each bind ATP. 220 to 224 (FEQME) provides a ligand contact to substrate. 329–333 (EPSLG) serves as a coordination point for substrate.

Belongs to the class-II aminoacyl-tRNA synthetase family. As to quaternary structure, homodimer.

It is found in the cytoplasm. It carries out the reaction tRNA(Gly) + glycine + ATP = glycyl-tRNA(Gly) + AMP + diphosphate. In terms of biological role, catalyzes the attachment of glycine to tRNA(Gly). This chain is Glycine--tRNA ligase, found in Lysinibacillus sphaericus (strain C3-41).